A 366-amino-acid chain; its full sequence is IgG receptor FcRn large subunit p51 (366 aa).

A signal peptide spans 1–22 (MGMSQPGVLLSLLLVLLPQTWG). Residues 23-111 (AEPRLPLMYH…RTLENQINGT (89 aa)) form an alpha-1 region. Over 23 to 298 (AEPRLPLMYH…VDLDSPARSS (276 aa)) the chain is Extracellular. N-linked (GlcNAc...) asparagine glycans are attached at residues Asn-109, Asn-126, Asn-150, and Asn-247. The alpha-2 stretch occupies residues 112–201 (FTLQGLLGCE…ERGRQNLEWK (90 aa)). 2 disulfide bridges follow: Cys-120/Cys-183 and Cys-222/Cys-276. Positions 202–291 (EPPSMRLKAR…GLAQPLTVDL (90 aa)) are alpha-3. Residues 203–290 (PPSMRLKARP…EGLAQPLTVD (88 aa)) enclose the Ig-like C1-type domain. Positions 293-298 (SPARSS) are connecting peptide. A helical transmembrane segment spans residues 299–322 (VPVVGIILGLLLVVVAIAGGVLLW). Over 323-366 (NRMRSGLPAPWLSLSGDDSGDLLPGGNLPPEAEPQGVNAFPATS) the chain is Cytoplasmic. Phosphoserine is present on Ser-335. The interval 344-366 (LLPGGNLPPEAEPQGVNAFPATS) is disordered.

It belongs to the immunoglobulin superfamily. As to quaternary structure, fcRn complex consists of two subunits: p51, and p14 which is equivalent to beta-2-microglobulin. It forms an MHC class I-like heterodimer. Interacts with albumin/ALB; this interaction regulates ALB homeostasis. As to expression, intestinal epithelium.

The protein resides in the cell membrane. Its subcellular location is the endosome membrane. In terms of biological role, cell surface receptor that transfers passive humoral immunity from the mother to the newborn. Binds to the Fc region of monomeric immunoglobulin gamma and mediates its selective uptake from milk. IgG in the milk is bound at the apical surface of the intestinal epithelium. The resultant FcRn-IgG complexes are transcytosed across the intestinal epithelium and IgG is released from FcRn into blood or tissue fluids. Throughout life, contributes to effective humoral immunity by recycling IgG and extending its half-life in the circulation. Mechanistically, monomeric IgG binding to FcRn in acidic endosomes of endothelial and hematopoietic cells recycles IgG to the cell surface where it is released into the circulation. In addition of IgG, regulates homeostasis of the other most abundant circulating protein albumin/ALB. This Rattus norvegicus (Rat) protein is IgG receptor FcRn large subunit p51 (Fcgrt).